The chain runs to 588 residues: L-fucose isomerase (588 aa).

Catalysis depends on proton acceptor residues glutamate 335 and aspartate 359. Glutamate 335, aspartate 359, and histidine 525 together coordinate Mn(2+).

The protein belongs to the L-fucose isomerase family. Mn(2+) serves as cofactor.

The protein localises to the cytoplasm. It catalyses the reaction L-fucose = L-fuculose. The protein operates within carbohydrate degradation; L-fucose degradation; L-lactaldehyde and glycerone phosphate from L-fucose: step 1/3. In terms of biological role, converts the aldose L-fucose into the corresponding ketose L-fuculose. The protein is L-fucose isomerase of Streptococcus pneumoniae (strain JJA).